Here is a 56-residue protein sequence, read N- to C-terminus: Large ribosomal subunit protein bL32 (56 aa).

Residues 1-27 (MAVQQNKKSRSRRDMRRSHDALTTAAV) form a disordered region. Over residues 7–16 (KKSRSRRDMR) the composition is skewed to basic residues.

It belongs to the bacterial ribosomal protein bL32 family.

The polypeptide is Large ribosomal subunit protein bL32 (Actinobacillus pleuropneumoniae serotype 7 (strain AP76)).